The sequence spans 621 residues: Chaperone protein HtpG (621 aa).

The a; substrate-binding stretch occupies residues 1–328; it reads MTQEKKKFDA…SEDLPLNISR (328 aa). Residues 329 to 544 form a b region; that stretch reads ESLQHNNVLE…DTAMDIRMER (216 aa). The segment at 545-621 is c; that stretch reads FLIEQKQIAN…LNDILQKAIL (77 aa).

It belongs to the heat shock protein 90 family. Homodimer.

The protein resides in the cytoplasm. Its function is as follows. Molecular chaperone. Has ATPase activity. The polypeptide is Chaperone protein HtpG (Rickettsia prowazekii (strain Madrid E)).